An 89-amino-acid chain; its full sequence is MVKLRLKRCGKKQRAVYRIVAIDVRSRREGRDLRKVGFYDPIKNQTYLNIPVILYFLERGAQPTGTVQDISKRAGVFMELSSNQQTKFH.

Belongs to the bacterial ribosomal protein bS16 family.

Its subcellular location is the plastid. It is found in the chloroplast. The chain is Small ribosomal subunit protein bS16c from Glycine max (Soybean).